Here is a 42-residue protein sequence, read N- to C-terminus: Potassium channel toxin gamma-KTx 1.8 (42 aa).

4 cysteine pairs are disulfide-bonded: Cys-5–Cys-23, Cys-11–Cys-34, Cys-20–Cys-39, and Cys-24–Cys-41.

It belongs to the ergtoxin family. Gamma-KTx 1 subfamily. Expressed by the venom gland.

The protein localises to the secreted. Blocks in a reversible manner human and rat Kv11.1/KCNH2/ERG1 potassium channels. Also completely and irreversibly blocks rat Kv11.2/KCNH6/ERG2 and human Kv11.3/KCNH7/ERG3 channels. Also weakly inhibits Kir2.1/KCNJ2 and Kv1.2/KCNA2 potassium channels. The chain is Potassium channel toxin gamma-KTx 1.8 from Centruroides elegans (Bark scorpion).